The sequence spans 880 residues: Alanine--tRNA ligase (880 aa).

Zn(2+) contacts are provided by H563, H567, C673, and H677.

The protein belongs to the class-II aminoacyl-tRNA synthetase family. The cofactor is Zn(2+).

The protein localises to the cytoplasm. It carries out the reaction tRNA(Ala) + L-alanine + ATP = L-alanyl-tRNA(Ala) + AMP + diphosphate. Functionally, catalyzes the attachment of alanine to tRNA(Ala) in a two-step reaction: alanine is first activated by ATP to form Ala-AMP and then transferred to the acceptor end of tRNA(Ala). Also edits incorrectly charged Ser-tRNA(Ala) and Gly-tRNA(Ala) via its editing domain. The sequence is that of Alanine--tRNA ligase from Caulobacter vibrioides (strain ATCC 19089 / CIP 103742 / CB 15) (Caulobacter crescentus).